A 216-amino-acid chain; its full sequence is Thiamine-phosphate synthase (216 aa).

4-amino-2-methyl-5-(diphosphooxymethyl)pyrimidine is bound by residues 35–39 and Asn67; that span reads QLRDK. The Mg(2+) site is built by Asp68 and Asp87. Residue Ser106 participates in 4-amino-2-methyl-5-(diphosphooxymethyl)pyrimidine binding. Position 132–134 (132–134) interacts with 2-[(2R,5Z)-2-carboxy-4-methylthiazol-5(2H)-ylidene]ethyl phosphate; that stretch reads TSS. Lys135 lines the 4-amino-2-methyl-5-(diphosphooxymethyl)pyrimidine pocket. 2-[(2R,5Z)-2-carboxy-4-methylthiazol-5(2H)-ylidene]ethyl phosphate contacts are provided by residues Gly163 and 183-184; that span reads IS.

It belongs to the thiamine-phosphate synthase family. The cofactor is Mg(2+).

It carries out the reaction 2-[(2R,5Z)-2-carboxy-4-methylthiazol-5(2H)-ylidene]ethyl phosphate + 4-amino-2-methyl-5-(diphosphooxymethyl)pyrimidine + 2 H(+) = thiamine phosphate + CO2 + diphosphate. The catalysed reaction is 2-(2-carboxy-4-methylthiazol-5-yl)ethyl phosphate + 4-amino-2-methyl-5-(diphosphooxymethyl)pyrimidine + 2 H(+) = thiamine phosphate + CO2 + diphosphate. It catalyses the reaction 4-methyl-5-(2-phosphooxyethyl)-thiazole + 4-amino-2-methyl-5-(diphosphooxymethyl)pyrimidine + H(+) = thiamine phosphate + diphosphate. Its pathway is cofactor biosynthesis; thiamine diphosphate biosynthesis; thiamine phosphate from 4-amino-2-methyl-5-diphosphomethylpyrimidine and 4-methyl-5-(2-phosphoethyl)-thiazole: step 1/1. Condenses 4-methyl-5-(beta-hydroxyethyl)thiazole monophosphate (THZ-P) and 2-methyl-4-amino-5-hydroxymethyl pyrimidine pyrophosphate (HMP-PP) to form thiamine monophosphate (TMP). This is Thiamine-phosphate synthase from Methanoregula boonei (strain DSM 21154 / JCM 14090 / 6A8).